The primary structure comprises 98 residues: NADH-ubiquinone oxidoreductase chain 4L (98 aa).

3 consecutive transmembrane segments (helical) span residues 2 to 22 (PSIF…TLVF), 29 to 49 (SLLC…LIIL), and 61 to 81 (ILLL…LVMV).

Belongs to the complex I subunit 4L family. Core subunit of respiratory chain NADH dehydrogenase (Complex I) which is composed of 45 different subunits.

It localises to the mitochondrion inner membrane. The catalysed reaction is a ubiquinone + NADH + 5 H(+)(in) = a ubiquinol + NAD(+) + 4 H(+)(out). Core subunit of the mitochondrial membrane respiratory chain NADH dehydrogenase (Complex I) which catalyzes electron transfer from NADH through the respiratory chain, using ubiquinone as an electron acceptor. Part of the enzyme membrane arm which is embedded in the lipid bilayer and involved in proton translocation. The chain is NADH-ubiquinone oxidoreductase chain 4L (MT-ND4L) from Propithecus tattersalli (Golden-crowned Sifaka).